Here is a 688-residue protein sequence, read N- to C-terminus: Ethylmalonyl-CoA mutase (688 aa).

Positions 530–659 (TPRLVVGKPG…VGLAKVVERA (130 aa)) constitute a B12-binding domain. Residue H543 coordinates adenosylcob(III)alamin. The tract at residues 666–688 (DRADTEAGVPGAPKRNESGAQVF) is disordered.

It belongs to the methylmalonyl-CoA mutase family. Adenosylcob(III)alamin is required as a cofactor.

The catalysed reaction is (2R)-ethylmalonyl-CoA = (2S)-methylsuccinyl-CoA. Its function is as follows. Radical enzyme that catalyzes the transformation of (2R)-ethylmalonyl-CoA to (2S)-methylsuccinyl-CoA. Is involved in the ethylmalonyl-CoA pathway for acetyl-CoA assimilation required for M.extorquens growth on one- and two-carbon compounds such as ethylamine, methanol or ethanol as sole carbon source. This enzyme acts as a regulatory metabolic control point in this pathway, that allows M.extorquens to efficiently restore metabolic balance when challenged with a sudden change in the growth substrate. This chain is Ethylmalonyl-CoA mutase, found in Methylorubrum extorquens (strain ATCC 14718 / DSM 1338 / JCM 2805 / NCIMB 9133 / AM1) (Methylobacterium extorquens).